A 393-amino-acid polypeptide reads, in one-letter code: Beta-1,3-galactosyltransferase 7 (393 aa).

A helical; Signal-anchor for type II membrane protein membrane pass occupies residues 9 to 29 (VISLKWVPFLCISFFALGAIF). The segment at 89 to 112 (SLDKSVSTLSSTRSSQEMVDGSET) is disordered. Residues 93-103 (SVSTLSSTRSS) show a composition bias toward low complexity.

Belongs to the glycosyltransferase 31 family. Mn(2+) is required as a cofactor. In terms of tissue distribution, expressed in leaves, stems, flowers and siliques.

The protein localises to the golgi apparatus membrane. It functions in the pathway protein modification; protein glycosylation. In terms of biological role, beta-1,3-galactosyltransferase that transfers galactose from UDP-galactose to substrates with a terminal glycosyl residue. The polypeptide is Beta-1,3-galactosyltransferase 7 (B3GALT7) (Arabidopsis thaliana (Mouse-ear cress)).